A 472-amino-acid chain; its full sequence is Siroheme synthase 1 (472 aa).

Positions 1-203 (MDYLPLFADL…GQLTEAENEL (203 aa)) are precorrin-2 dehydrogenase /sirohydrochlorin ferrochelatase. NAD(+)-binding positions include 22-23 (EV) and 43-44 (QT). Serine 128 is subject to Phosphoserine. The uroporphyrinogen-III C-methyltransferase stretch occupies residues 215–472 (GEVALVGAGP…AISPSVVNLA (258 aa)). Proline 224 is an S-adenosyl-L-methionine binding site. Residue aspartate 247 is the Proton acceptor of the active site. Lysine 269 (proton donor) is an active-site residue. S-adenosyl-L-methionine is bound by residues 300–302 (GGD), isoleucine 305, 330–331 (TA), methionine 382, and glycine 411.

This sequence in the N-terminal section; belongs to the precorrin-2 dehydrogenase / sirohydrochlorin ferrochelatase family. The protein in the C-terminal section; belongs to the precorrin methyltransferase family.

The enzyme catalyses uroporphyrinogen III + 2 S-adenosyl-L-methionine = precorrin-2 + 2 S-adenosyl-L-homocysteine + H(+). The catalysed reaction is precorrin-2 + NAD(+) = sirohydrochlorin + NADH + 2 H(+). It carries out the reaction siroheme + 2 H(+) = sirohydrochlorin + Fe(2+). The protein operates within cofactor biosynthesis; adenosylcobalamin biosynthesis; precorrin-2 from uroporphyrinogen III: step 1/1. It participates in cofactor biosynthesis; adenosylcobalamin biosynthesis; sirohydrochlorin from precorrin-2: step 1/1. Its pathway is porphyrin-containing compound metabolism; siroheme biosynthesis; precorrin-2 from uroporphyrinogen III: step 1/1. It functions in the pathway porphyrin-containing compound metabolism; siroheme biosynthesis; siroheme from sirohydrochlorin: step 1/1. The protein operates within porphyrin-containing compound metabolism; siroheme biosynthesis; sirohydrochlorin from precorrin-2: step 1/1. Functionally, multifunctional enzyme that catalyzes the SAM-dependent methylations of uroporphyrinogen III at position C-2 and C-7 to form precorrin-2 via precorrin-1. Then it catalyzes the NAD-dependent ring dehydrogenation of precorrin-2 to yield sirohydrochlorin. Finally, it catalyzes the ferrochelation of sirohydrochlorin to yield siroheme. This Yersinia pseudotuberculosis serotype I (strain IP32953) protein is Siroheme synthase 1.